Reading from the N-terminus, the 423-residue chain is T-box protein 2 (423 aa).

The T-box DNA-binding region spans Leu70–Asp243. Disordered regions lie at residues Ala238–Ser324 and Val384–Pro423. The span at Asp261–Ser283 shows a compositional bias: polar residues. Residues Thr302–Ser317 are compositionally biased toward low complexity. Basic and acidic residues predominate over residues Ala394 to Lys404.

Post-translationally, sumoylated. As to expression, expressed in body wall muscles and a subset of pharyngeal neurons. Expressed in head neurons and occassionally tail neurons. Not expressed in the pharynx.

The protein localises to the nucleus. In terms of biological role, involved in the transcriptional regulation of genes required for the development of pharyngeal muscles derived from the ABa lineage. Acts as a transcriptional repressor and binds to T-box binding sites in its own promoter to negatively autoregulate its own expression in neurons, seam cells and the gut in order to restrict its expression to certain tissues. May function together with the nfya-1-NF-Y complex to repress its own expression. Plays a role in neural fate specification in the hermaphrodite-specific neuron (HSN)/PHB neuron lineage, acting in concert with homeobox protein egl-5 and the asymmetric cell division protein ham-1. The chain is T-box protein 2 from Caenorhabditis elegans.